The following is a 78-amino-acid chain: Large ribosomal subunit protein bL28 (78 aa).

Belongs to the bacterial ribosomal protein bL28 family.

The sequence is that of Large ribosomal subunit protein bL28 from Francisella tularensis subsp. holarctica (strain FTNF002-00 / FTA).